The sequence spans 562 residues: Carboxylesterase 1E (562 aa).

The first 19 residues, 1-19 (MCLSALILVSLAAFTAGAG), serve as a signal peptide directing secretion. Asn-80 carries an N-linked (GlcNAc...) asparagine glycan. An intrachain disulfide couples Cys-88 to Cys-117. Ser-222 serves as the catalytic Acyl-ester intermediate. Cys-274 and Cys-285 form a disulfide bridge. N-linked (GlcNAc...) asparagine glycosylation is present at Asn-276. Residues Glu-354 and His-467 each act as charge relay system in the active site. An N-linked (GlcNAc...) asparagine glycan is attached at Asn-490. The Prevents secretion from ER signature appears at 559–562 (HTEL).

The protein belongs to the type-B carboxylesterase/lipase family.

It is found in the endoplasmic reticulum lumen. Its subcellular location is the microsome membrane. The enzyme catalyses a carboxylic ester + H2O = an alcohol + a carboxylate + H(+). The catalysed reaction is all-trans-retinyl hexadecanoate + H2O = all-trans-retinol + hexadecanoate + H(+). Its function is as follows. Involved in the detoxification of xenobiotics and in the activation of ester and amide prodrugs. Hydrolyzes retinyl esters. The chain is Carboxylesterase 1E from Mus musculus (Mouse).